We begin with the raw amino-acid sequence, 209 residues long: Probable GTP-binding protein EngB (209 aa).

The EngB-type G domain maps to 23 to 198; that stretch reads NGAEIAFAGR…EKVVAGWLVP (176 aa). Residues 31–38, 58–62, 76–79, 143–146, and 177–179 contribute to the GTP site; these read GRSNAGKS, GRTQL, DLPG, TKSD, and FSS. 2 residues coordinate Mg(2+): serine 38 and threonine 60.

It belongs to the TRAFAC class TrmE-Era-EngA-EngB-Septin-like GTPase superfamily. EngB GTPase family. The cofactor is Mg(2+).

Its function is as follows. Necessary for normal cell division and for the maintenance of normal septation. This Azoarcus sp. (strain BH72) protein is Probable GTP-binding protein EngB.